A 127-amino-acid chain; its full sequence is uncharacterized protein (127 aa).

2 consecutive transmembrane segments (helical) span residues 13–35 (ILLL…GIIF) and 57–81 (AVLI…IMIW).

It localises to the cell membrane. This is an uncharacterized protein from Mycoplasma genitalium (strain ATCC 33530 / DSM 19775 / NCTC 10195 / G37) (Mycoplasmoides genitalium).